Reading from the N-terminus, the 505-residue chain is Probable Xaa-Pro aminopeptidase Pc16g13390 (505 aa).

Mn(2+)-binding residues include aspartate 287, aspartate 298, glutamate 436, and glutamate 475.

This sequence belongs to the peptidase M24B family. It depends on Mn(2+) as a cofactor.

The enzyme catalyses Release of any N-terminal amino acid, including proline, that is linked to proline, even from a dipeptide or tripeptide.. In terms of biological role, catalyzes the removal of a penultimate prolyl residue from the N-termini of peptides. The chain is Probable Xaa-Pro aminopeptidase Pc16g13390 from Penicillium rubens (strain ATCC 28089 / DSM 1075 / NRRL 1951 / Wisconsin 54-1255) (Penicillium chrysogenum).